The sequence spans 497 residues: Proline--tRNA ligase (497 aa).

This sequence belongs to the class-II aminoacyl-tRNA synthetase family. ProS type 3 subfamily. Homodimer.

It is found in the cytoplasm. The catalysed reaction is tRNA(Pro) + L-proline + ATP = L-prolyl-tRNA(Pro) + AMP + diphosphate. Its function is as follows. Catalyzes the attachment of proline to tRNA(Pro) in a two-step reaction: proline is first activated by ATP to form Pro-AMP and then transferred to the acceptor end of tRNA(Pro). In Bacteroides fragilis (strain ATCC 25285 / DSM 2151 / CCUG 4856 / JCM 11019 / LMG 10263 / NCTC 9343 / Onslow / VPI 2553 / EN-2), this protein is Proline--tRNA ligase.